The sequence spans 342 residues: Homocysteine S-methyltransferase 4 (342 aa).

The Hcy-binding domain occupies 13–328; the sequence is ALRGFVREAG…ATVRAIARAV (316 aa). 3 residues coordinate Zn(2+): Cys245, Cys313, and Cys314.

Monomer. Zn(2+) serves as cofactor.

The catalysed reaction is S-methyl-L-methionine + L-homocysteine = 2 L-methionine + H(+). Functionally, catalyzes methyl transfer from S-methylmethionine (SMM) to adenosyl-L-homocysteine (AdoMet). SMM degradation (by HMT-1, HMT-2, HMT-3 and HMT-4) and biosynthesis (by MMT1) constitute the SMM cycle in plants, which is probably required to achieve short term control of AdoMet level. The chain is Homocysteine S-methyltransferase 4 (HMT-4) from Zea mays (Maize).